An 888-amino-acid polypeptide reads, in one-letter code: Collagen alpha chain (888 aa).

A disordered region spans residues Ala-1–Glu-627. One can recognise a Collagen-like 1 domain in the interval Gly-3–Gly-60. 2 stretches are compositionally biased toward low complexity: residues Pro-59–Thr-73 and Thr-148–Ile-164. A compositionally biased stretch (basic and acidic residues) spans Arg-179 to Arg-190. Residues Pro-194–Pro-203 show a composition bias toward low complexity. Positions Ser-311–Ser-320 are enriched in pro residues. Low complexity predominate over residues Ser-422–Asn-440. Residues Gly-441 to Gly-450 are compositionally biased toward gly residues. 2 stretches are compositionally biased toward low complexity: residues Glu-460–Pro-475 and Glu-508–Lys-518. Residues Gly-513–Glu-571 enclose the Collagen-like 2 domain. The segment covering Pro-610–Gln-622 has biased composition (pro residues). Residues Glu-661–His-884 enclose the Fibrillar collagen NC1 domain. Disulfide bonds link Cys-731–Cys-882 and Cys-793–Cys-833.

Belongs to the fibrillar collagen family. In terms of tissue distribution, component of the acid-insoluble organic matrix of the aragonitic skeleton (at protein level).

Its subcellular location is the secreted. The polypeptide is Collagen alpha chain (Acropora millepora (Staghorn coral)).